The primary structure comprises 552 residues: Amino-acid acetyltransferase, mitochondrial (552 aa).

A mitochondrion-targeting transit peptide spans Met1 to Ser32. An N-acetyltransferase domain is found at Gln379–Asp545.

Belongs to the acetyltransferase family.

It is found in the mitochondrion. It carries out the reaction L-glutamate + acetyl-CoA = N-acetyl-L-glutamate + CoA + H(+). It participates in amino-acid biosynthesis; L-arginine biosynthesis; N(2)-acetyl-L-ornithine from L-glutamate: step 1/4. In terms of biological role, N-acetylglutamate synthase involved in arginine biosynthesis. This Kluyveromyces lactis (strain ATCC 8585 / CBS 2359 / DSM 70799 / NBRC 1267 / NRRL Y-1140 / WM37) (Yeast) protein is Amino-acid acetyltransferase, mitochondrial (ARG2).